We begin with the raw amino-acid sequence, 343 residues long: Ornithine carbamoyltransferase (343 aa).

Residues 62 to 65 (STRT), Q89, R113, and 140 to 143 (HPTQ) each bind carbamoyl phosphate. Residues N172, D236, and 240-241 (SM) each bind L-ornithine. Residues 278–279 (CL) and R323 contribute to the carbamoyl phosphate site.

It belongs to the aspartate/ornithine carbamoyltransferase superfamily. OTCase family.

The protein localises to the cytoplasm. It carries out the reaction carbamoyl phosphate + L-ornithine = L-citrulline + phosphate + H(+). The protein operates within amino-acid degradation; L-arginine degradation via ADI pathway; carbamoyl phosphate from L-arginine: step 2/2. Functionally, reversibly catalyzes the transfer of the carbamoyl group from carbamoyl phosphate (CP) to the N(epsilon) atom of ornithine (ORN) to produce L-citrulline. This chain is Ornithine carbamoyltransferase, found in Levilactobacillus brevis (strain ATCC 367 / BCRC 12310 / CIP 105137 / JCM 1170 / LMG 11437 / NCIMB 947 / NCTC 947) (Lactobacillus brevis).